The chain runs to 419 residues: Queuine tRNA-ribosyltransferase accessory subunit 2 (419 aa).

Residues Cys-326, Cys-328, Cys-331, and His-357 each contribute to the Zn(2+) site.

Belongs to the queuine tRNA-ribosyltransferase family. QTRT2 subfamily. As to quaternary structure, heterodimer of a catalytic subunit and an accessory subunit. Zn(2+) is required as a cofactor.

It is found in the cytoplasm. Non-catalytic subunit of the queuine tRNA-ribosyltransferase (TGT) that catalyzes the base-exchange of a guanine (G) residue with queuine (Q) at position 34 (anticodon wobble position) in tRNAs with GU(N) anticodons (tRNA-Asp, -Asn, -His and -Tyr), resulting in the hypermodified nucleoside queuosine (7-(((4,5-cis-dihydroxy-2-cyclopenten-1-yl)amino)methyl)-7-deazaguanosine). This is Queuine tRNA-ribosyltransferase accessory subunit 2 from Drosophila grimshawi (Hawaiian fruit fly).